A 659-amino-acid chain; its full sequence is QWRF motif-containing protein 2 (659 aa).

Disordered regions lie at residues Met1–Val125, Ser157–Gly221, Asp291–Ser317, Arg340–Ile359, and Ser371–Asn429. The segment covering Ser42–Ser72 has biased composition (low complexity). A compositionally biased stretch (polar residues) spans Arg90–Thr102. Residues Ser172–Lys190 are compositionally biased toward basic and acidic residues. Polar residues-rich tracts occupy residues Ser206–Arg216 and Asp291–Val303. Low complexity-rich tracts occupy residues Gly345–Ile359 and Ala401–Arg418. A QWRF motif motif is present at residues Gln468–Phe471.

Belongs to the QWRF family.

The sequence is that of QWRF motif-containing protein 2 (QWRF2) from Arabidopsis thaliana (Mouse-ear cress).